Consider the following 106-residue polypeptide: UPF0145 protein Tpet_0165 (106 aa).

It belongs to the UPF0145 family.

The sequence is that of UPF0145 protein Tpet_0165 from Thermotoga petrophila (strain ATCC BAA-488 / DSM 13995 / JCM 10881 / RKU-1).